The sequence spans 354 residues: P2Y purinoceptor 13 (354 aa).

Residues 1 to 49 (MTAAIRRQRELSILPKVTLEAMNTTVMQGFNRSERCPRDTRIVQLVFPA) lie on the Extracellular side of the membrane. 2 N-linked (GlcNAc...) asparagine glycosylation sites follow: Asn23 and Asn31. Residues 50-70 (LYTVVFLTGILLNTLALWVFV) form a helical membrane-spanning segment. Residues 71-77 (HIPSSST) are Cytoplasmic-facing. Residues 78–98 (FIIYLKNTLVADLIMTLMLPF) form a helical membrane-spanning segment. At 99–117 (KILSDSHLAPWQLRAFVCR) the chain is on the extracellular side. Cys116 and Cys194 are disulfide-bonded. Residues 118–138 (FSSVIFYETMYVGIVLLGLIA) form a helical membrane-spanning segment. At 139 to 161 (FDRFLKIIRPLRNIFLKKPVFAK) the chain is on the cytoplasmic side. Residues 162–182 (TVSIFIWFFLFFISLPNTILS) traverse the membrane as a helical segment. Residues 183-211 (NKEATPSSVKKCASLKGPLGLKWHQMVNN) are Extracellular-facing. A helical transmembrane segment spans residues 212 to 232 (ICQFIFWTVFILMLVFYVVIA). At 233–252 (KKVYDSYRKSKSKDRKNNKK) the chain is on the cytoplasmic side. A helical membrane pass occupies residues 253–273 (LEGKVFVVVAVFFVCFAPFHF). Topologically, residues 274–300 (ARVPYTHSQTNNKTDCRLQNQLFIAKE) are extracellular. A glycan (N-linked (GlcNAc...) asparagine) is linked at Asn285. Residues 301-321 (TTLFLAATNICMDPLIYIFLC) traverse the membrane as a helical segment. Residues 322 to 333 (KKFTEKLPCMQG) lie on the Cytoplasmic side of the membrane. Positions 335–354 (KTTASSQENHSSQTDNITLG) are disordered.

The protein belongs to the G-protein coupled receptor 1 family. Strong expression in spleen and adult brain. Lower expression in placenta, lung, liver, spinal cord, thymus, small intestine, uterus, stomach, testis, fetal brain, and adrenal gland. Not detected in pancreas, heart, kidney, skeletal muscle, ovary or fetal aorta. Clearly detected in lymph node and bone marrow, weakly detected in peripheral blood mononuclear cells (PBMC) and in peripheral blood leukocytes (PBL), but not detected in polymorphonuclear cells (PMN). In the brain, detected in all brain regions examined.

The protein resides in the cell membrane. Its function is as follows. Receptor for ADP. Coupled to G(i)-proteins. May play a role in hematopoiesis and the immune system. This is P2Y purinoceptor 13 (P2RY13) from Homo sapiens (Human).